A 530-amino-acid polypeptide reads, in one-letter code: Fusaric acid resistance protein FusA (530 aa).

A signal peptide spans 1 to 23; sequence MQSPATKGTLALAVLAVSLIMAG. A lipid anchor (N-palmitoyl cysteine) is attached at C24. Residue C24 is the site of S-diacylglycerol cysteine attachment. Disordered regions lie at residues 375-442 and 476-530; these read NAGV…RQRA and GVET…PAAR. 2 stretches are compositionally biased toward low complexity: residues 421–430 and 494–530; these read RPQLPAVARR and AAGA…PAAR.

Belongs to the outer membrane factor (OMF) (TC 1.B.17) family.

Its subcellular location is the cell membrane. Involved in the resistance (detoxification) of the fungal toxin fusaric acid. The protein is Fusaric acid resistance protein FusA (fusA) of Burkholderia cepacia (Pseudomonas cepacia).